A 494-amino-acid polypeptide reads, in one-letter code: 4-trimethylaminobutyraldehyde dehydrogenase (494 aa).

Position 2 is an N-acetylserine; in 4-trimethylaminobutyraldehyde dehydrogenase, N-terminally processed (Ser-2). Lys-30 is modified (N6-acetyllysine; alternate). Lys-30 bears the N6-succinyllysine; alternate mark. Lys-59 carries the post-translational modification N6-succinyllysine. Residues Lys-180 and 232–236 each bind NAD(+); that span reads GSVPT. Glu-254 serves as the catalytic Proton acceptor. Residue Cys-288 is the Nucleophile of the active site. Lys-298 is subject to N6-acetyllysine. Position 303 is an N6-acetyllysine; alternate (Lys-303). Lys-303 is subject to N6-succinyllysine; alternate. An N6-acetyllysine modification is found at Lys-344. Glu-391 is an NAD(+) binding site.

It belongs to the aldehyde dehydrogenase family. Homotetramer. As to expression, detected in brain (at protein level). High expression in adult liver, skeletal muscle, and kidney. Low levels in heart, pancreas, lung and brain. Expressed in all regions of the brain. Expression levels are variable in the different brain areas, with the highest levels in the spinal cord and the lowest in the occipital pole.

The protein resides in the cytoplasm. It is found in the cytosol. The enzyme catalyses 4-(trimethylamino)butanal + NAD(+) + H2O = 4-(trimethylamino)butanoate + NADH + 2 H(+). It catalyses the reaction an aldehyde + NAD(+) + H2O = a carboxylate + NADH + 2 H(+). The catalysed reaction is 4-aminobutanal + NAD(+) + H2O = 4-aminobutanoate + NADH + 2 H(+). It carries out the reaction formaldehyde + NAD(+) + H2O = formate + NADH + 2 H(+). The enzyme catalyses acetaldehyde + NAD(+) + H2O = acetate + NADH + 2 H(+). It catalyses the reaction imidazole-4-acetaldehyde + NAD(+) + H2O = imidazole-4-acetate + NADH + 2 H(+). The catalysed reaction is acrolein + NAD(+) + H2O = acrylate + NADH + 2 H(+). It carries out the reaction (5-hydroxyindol-3-yl)acetaldehyde + NAD(+) + H2O = (5-hydroxyindol-3-yl)acetate + NADH + 2 H(+). The enzyme catalyses 3,4-dihydroxyphenylacetaldehyde + NAD(+) + H2O = 3,4-dihydroxyphenylacetate + NADH + 2 H(+). It catalyses the reaction spermine monoaldehyde + NAD(+) + H2O = N-(2-carboxyethyl)spermidine + NADH + 2 H(+). The catalysed reaction is propanal + NAD(+) + H2O = propanoate + NADH + 2 H(+). It carries out the reaction butanal + NAD(+) + H2O = butanoate + NADH + 2 H(+). The enzyme catalyses pentanal + NAD(+) + H2O = pentanoate + NADH + 2 H(+). It catalyses the reaction hexanal + NAD(+) + H2O = hexanoate + NADH + 2 H(+). The protein operates within amine and polyamine biosynthesis; carnitine biosynthesis. In terms of biological role, converts gamma-trimethylaminobutyraldehyde into gamma-butyrobetaine with high efficiency (in vitro). Can catalyze the irreversible oxidation of a broad range of aldehydes to the corresponding acids in an NAD-dependent reaction, but with low efficiency. Catalyzes the oxidation of aldehydes arising from biogenic amines and polyamines. The chain is 4-trimethylaminobutyraldehyde dehydrogenase (ALDH9A1) from Homo sapiens (Human).